A 624-amino-acid polypeptide reads, in one-letter code: MLSANAKVKVQNFGRFLSNMVMPNIGAFIAWGFITALFIPTGWLPNETLAKLVGPMITYLLPLLIGYSGGKLIAGERGAVVGAIATAGVIVGTDIPMFLGAMIAGPTGGWAIKRFDKWADGKIKSGFEMLVNNFSSGIIGMILAILFFWLIGPAVKALSTMLAAGVDILVKAHLLPLTSIFVEPAKILFLNNAINHGIFSPLGIQQSQEFGQSIFFLIEANPGPGLGVLLAYIIFGKGTAKQTAGGATIIHFFGGIHEIYFPYVLMNPRLLLAVIAGGVSGVFTLVLFNAGLVAPASPGSIIAVLLMTPQNAIVGVLASVAIAATVSFVIASFFLKIQKEENGHSLEKMQAASKAMKSGVQFNTPARYQGVQKIFVACDAGMGSSAMGASMLRKKVKEAGLAIEVTNCAINDLPEDAQLVITHQDLTLRAKKHTPNAMHFSLNNFLDAHFYDNLVQDLSNTKVADLAKVSTLEPQEAPQTAFVLTEKQVFLGLKAANKEEAIRFAGERLVESGFVLPSYVDAMFEREKMVSTYLGEGIAVPHGTIEAKDAVLKTGVVVCQYPEGVKFNEDEEDSIAKLVIGIAAKNNEHLQVVSAITNALDNEDAIRILSETDDVEKVLALLKA.

Residues 13 to 336 (FGRFLSNMVM…SFVIASFFLK (324 aa)) form the PTS EIIC type-2 domain. Transmembrane regions (helical) follow at residues 25 to 46 (IGAFIAWGFITALFIPTGWLPN), 51 to 71 (KLVGPMITYLLPLLIGYSGGK), 135 to 156 (SSGIIGMILAILFFWLIGPAVK), 166 to 186 (VDILVKAHLLPLTSIFVEPAK), 274 to 293 (VIAGGVSGVFTLVLFNAGLV), and 314 to 335 (VGVLASVAIAATVSFVIASFFL). Residues 372–463 (QKIFVACDAG…LVQDLSNTKV (92 aa)) enclose the PTS EIIB type-2 domain. Cysteine 378 functions as the Phosphocysteine intermediate; for EIIB activity in the catalytic mechanism. Cysteine 378 is modified (phosphocysteine; by EIIA). Positions 482 to 624 (FVLTEKQVFL…VEKVLALLKA (143 aa)) constitute a PTS EIIA type-2 domain. Catalysis depends on histidine 542, which acts as the Tele-phosphohistidine intermediate; for EIIA activity. The residue at position 542 (histidine 542) is a Phosphohistidine; by HPr.

As to quaternary structure, homodimer. In terms of processing, an intramolecular phosphotransfer takes places between His-542 and Cys-378.

Its subcellular location is the cell inner membrane. It catalyses the reaction D-mannitol(out) + N(pros)-phospho-L-histidyl-[protein] = D-mannitol 1-phosphate(in) + L-histidyl-[protein]. Functionally, the phosphoenolpyruvate-dependent sugar phosphotransferase system (sugar PTS), a major carbohydrate active transport system, catalyzes the phosphorylation of incoming sugar substrates concomitantly with their translocation across the cell membrane. This system is involved in D-mannitol transport. This Pasteurella multocida (strain Pm70) protein is PTS system mannitol-specific EIICBA component (mtlA).